The following is a 202-amino-acid chain: Transcription factor IBH1 (202 aa).

Over residues 1–16 the composition is skewed to pro residues; it reads MDAKRTPPPPTPPNPN. The disordered stretch occupies residues 1–33; the sequence is MDAKRTPPPPTPPNPNPSVIGSGAAADGGGFGR. Residues 136–185 enclose the bHLH domain; sequence TSAAARAVPPPPRQQGEPPRAEALRRLVPGGAGMEYSSLLEETADYLRSL.

It belongs to the bHLH protein family. As to quaternary structure, interacts with ILI1. Binds to ILI5/BUL1 and BC1. Interacts with BCL1 and BCL2. As to expression, highly expressed in roots and at lower levels in leaf blades, leaf sheaths, lamina joint, stems and panicles.

Its function is as follows. Atypical and probable non DNA-binding bHLH transcription factor that acts as a negative regulator of cell elongation and plant development. Binds the transcription factor ILI1 and forms a heterodimer of antagonistic bHLH transcription factors that function downstream of BZR1 to mediate brassinosteroid regulation of cell elongation and lamina inclination. This is Transcription factor IBH1 from Oryza sativa subsp. japonica (Rice).